A 158-amino-acid chain; its full sequence is Transcription elongation factor GreA (158 aa).

The stretch at 45-72 (AEYHAAREQQSFIEGRIKQLEGELSHAE) forms a coiled coil.

It belongs to the GreA/GreB family.

In terms of biological role, necessary for efficient RNA polymerase transcription elongation past template-encoded arresting sites. The arresting sites in DNA have the property of trapping a certain fraction of elongating RNA polymerases that pass through, resulting in locked ternary complexes. Cleavage of the nascent transcript by cleavage factors such as GreA or GreB allows the resumption of elongation from the new 3'terminus. GreA releases sequences of 2 to 3 nucleotides. The polypeptide is Transcription elongation factor GreA (Xylella fastidiosa (strain M12)).